A 172-amino-acid chain; its full sequence is MTPTQKDGPRSNQDIRVPCVQLINDEGQHQGVVATQEALAMAAEVGLDLVEIVPNTEPPVCKIIDLGKLKYQTQKKAAEIRKKQKVIEIKEIKMRPNVDVHDYEVKLKAIHRFIGNGDKVKITLRFRGREMAHQDLGLKLLQRVKEDTSEIAKIEAEPKLEGRQMMMVIAPK.

The protein belongs to the IF-3 family. As to quaternary structure, monomer.

The protein resides in the cytoplasm. Functionally, IF-3 binds to the 30S ribosomal subunit and shifts the equilibrium between 70S ribosomes and their 50S and 30S subunits in favor of the free subunits, thus enhancing the availability of 30S subunits on which protein synthesis initiation begins. The polypeptide is Translation initiation factor IF-3 (Bartonella quintana (strain Toulouse) (Rochalimaea quintana)).